Here is a 104-residue protein sequence, read N- to C-terminus: Large ribosomal subunit protein uL24 (104 aa).

It belongs to the universal ribosomal protein uL24 family. Part of the 50S ribosomal subunit.

In terms of biological role, one of two assembly initiator proteins, it binds directly to the 5'-end of the 23S rRNA, where it nucleates assembly of the 50S subunit. Functionally, one of the proteins that surrounds the polypeptide exit tunnel on the outside of the subunit. This chain is Large ribosomal subunit protein uL24, found in Shewanella loihica (strain ATCC BAA-1088 / PV-4).